A 60-amino-acid chain; its full sequence is Putative mercuric resistance protein (60 aa).

This Shigella flexneri protein is Putative mercuric resistance protein.